We begin with the raw amino-acid sequence, 443 residues long: F-box only protein 39 (443 aa).

The region spanning 13–59 (QSCWATLPDVCLRRVFWWLGDRDRSRAALVCRKWNQIMYSADLWRYR) is the F-box domain.

Directly interacts with SKP1 and CUL1.

Substrate-recognition component of the SCF (SKP1-CUL1-F-box protein)-type E3 ubiquitin ligase complex. The chain is F-box only protein 39 (Fbxo39) from Rattus norvegicus (Rat).